Consider the following 492-residue polypeptide: Pre-mRNA-processing factor 19 (492 aa).

A U-box domain is found at 1–72 (MSFVCGISGE…APRNVSGTSI (72 aa)). WD repeat units follow at residues 207–246 (HSTG…VMQT), 249–288 (GHNK…SKAI), 291–330 (VHQA…SLCK), 336–375 (GSQI…VAAA), 378–417 (GHTA…NLKT), and 461–491 (DHSG…RVFS).

This sequence belongs to the WD repeat PRP19 family. In terms of assembly, homotetramer. Component of the NTC complex (or PRP19-associated complex) which is associated with the spliceosome.

It localises to the nucleus. Its subcellular location is the nucleoplasm. The enzyme catalyses S-ubiquitinyl-[E2 ubiquitin-conjugating enzyme]-L-cysteine + [acceptor protein]-L-lysine = [E2 ubiquitin-conjugating enzyme]-L-cysteine + N(6)-ubiquitinyl-[acceptor protein]-L-lysine.. It participates in protein modification; protein ubiquitination. In terms of biological role, probable ubiquitin-protein ligase which is mainly involved pre-mRNA splicing and DNA repair. Core component of the NTC/Nineteen complex which is part of the spliceosome and participates in its assembly, its remodeling and is required for its activity. Together with emb-4, necessary for interaction of rnp-4, a probable exon junction complex component, with mRNAs and spliceosomal snRNAs. Plays a role in nuclear retention of unspliced mRNAs. The polypeptide is Pre-mRNA-processing factor 19 (prp-19) (Caenorhabditis elegans).